The primary structure comprises 159 residues: MRLNELRDNDGATKIRTRVGRGIGSGKGKTGGRGVKGQKSRSGVAIKGFEGGQMPLHMRLPKRGFNKPNRKAWAEVNLGRLEKAIAEGKIDAKKPIDADVLIAAGLVRRALDGVRLLAKGELKSKVEITLAGASKAAIAAVEKAGGKVTLTAVADDAAE.

Residues 1–13 show a composition bias toward basic and acidic residues; that stretch reads MRLNELRDNDGAT. The disordered stretch occupies residues 1–41; that stretch reads MRLNELRDNDGATKIRTRVGRGIGSGKGKTGGRGVKGQKSR. Positions 21-35 are enriched in gly residues; it reads RGIGSGKGKTGGRGV.

This sequence belongs to the universal ribosomal protein uL15 family. As to quaternary structure, part of the 50S ribosomal subunit.

In terms of biological role, binds to the 23S rRNA. The protein is Large ribosomal subunit protein uL15 of Maricaulis maris (strain MCS10) (Caulobacter maris).